A 575-amino-acid chain; its full sequence is FAD-linked oxidoreductase asqF (575 aa).

A signal peptide spans 1–23 (MALFRLSAAIVVIFLYIWSPSQR). Residues N45 and N80 are each glycosylated (N-linked (GlcNAc...) asparagine). An FAD-binding PCMH-type domain is found at 118–306 (NQGRIPLYAA…VRVTMRTYPD (189 aa)). A Pros-8alpha-FAD histidine modification is found at H156. A glycan (N-linked (GlcNAc...) asparagine) is linked at N370.

The protein belongs to the oxygen-dependent FAD-linked oxidoreductase family. It depends on FAD as a cofactor.

The enzyme catalyses peniprequinolone + A = yaequinolone E + AH2. Its pathway is secondary metabolite biosynthesis. It functions in the pathway alkaloid biosynthesis. It participates in mycotoxin biosynthesis. In terms of biological role, FAD-linked oxidoreductase; part of the gene cluster that mediates the biosynthesis of the aspoquinolone mycotoxins. Within the pathway, asqF performs FAD-dependent dehydrogenation of the dimethylallyl quinolone peniprequinolone to yield the conjugated aryl diene yaequinolone E. The first step of the pathway is catalyzed by the nonribosomal peptide synthetase asqK that condenses anthranilic acid and O-methyl-L-tyrosine to produce 4'-methoxycyclopeptin. 4'-methoxycyclopeptin is then converted to 4'-methoxydehydrocyclopeptin by the ketoglutarate-dependent dioxygenase asqJ. AsqJ also converts its first product 4'-methoxydehydrocyclopeptin to 4'-methoxycyclopenin. The following conversion of 4'-methoxycyclopenin into 4'-methoxyviridicatin is catalyzed by the cyclopenase asqI. 4'-methoxyviridicatin is the precursor of quinolone natural products, and is further converted to quinolinone B. The prenyltransferase asqH1 then catalyzes the canonical Friedel-Crafts alkylation of quinolinone B with dimethylallyl cation to yield dimethylallyl quinolone, which is subjected to FAD-dependent dehydrogenation by the FAD-linked oxidoreductase asqF to yield conjugated aryl diene. The delta(3') double bond then serves as the site of the second alkylation with DMAPP catalyzed by the prenyltransferase asqH2 to yield a carbenium ion intermediate, which can be attacked by H(2)O to yield a styrenyl quinolone containing a C3'-hydroxyprenyl chain. The FAD-dependent monooxygenase asqG performs epoxidation of the terminal C7'-C8' olefin. Finally, after dehydratation of the epoxide at C3 by asqC, the quinolone epoxide rearrangement protein asqO catalyzes an enzymatic 3-exo-tet cyclization to yield the cyclopropyl-THF ring system in aspoquinolone. In Emericella nidulans (strain FGSC A4 / ATCC 38163 / CBS 112.46 / NRRL 194 / M139) (Aspergillus nidulans), this protein is FAD-linked oxidoreductase asqF.